A 555-amino-acid chain; its full sequence is Urocanate hydratase (555 aa).

Residues 52–53 (GG), glutamine 130, 176–178 (GMG), glutamate 196, arginine 201, 242–243 (NA), 263–267 (QTSAH), 273–274 (YL), and tyrosine 322 contribute to the NAD(+) site. Residue cysteine 410 is part of the active site. Residue glycine 492 participates in NAD(+) binding.

The protein belongs to the urocanase family. It depends on NAD(+) as a cofactor.

It is found in the cytoplasm. The catalysed reaction is 4-imidazolone-5-propanoate = trans-urocanate + H2O. It participates in amino-acid degradation; L-histidine degradation into L-glutamate; N-formimidoyl-L-glutamate from L-histidine: step 2/3. Its function is as follows. Catalyzes the conversion of urocanate to 4-imidazolone-5-propionate. The chain is Urocanate hydratase from Shewanella baltica (strain OS223).